Here is a 759-residue protein sequence, read N- to C-terminus: Phosphoribosylformylglycinamidine synthase subunit PurL (759 aa).

The active site involves His61. ATP is bound by residues Tyr64 and Lys105. Glu107 contributes to the Mg(2+) binding site. Substrate is bound by residues 108-111 (SHNH) and Arg130. His109 serves as the catalytic Proton acceptor. Residue Asp131 coordinates Mg(2+). Position 260 (Gln260) interacts with substrate. Asp288 provides a ligand contact to Mg(2+). Substrate is bound at residue 332–334 (ESQ). ATP-binding residues include Asp520 and Gly557. Asn558 lines the Mg(2+) pocket. Ser560 contributes to the substrate binding site.

It belongs to the FGAMS family. As to quaternary structure, monomer. Part of the FGAM synthase complex composed of 1 PurL, 1 PurQ and 2 PurS subunits.

The protein resides in the cytoplasm. It carries out the reaction N(2)-formyl-N(1)-(5-phospho-beta-D-ribosyl)glycinamide + L-glutamine + ATP + H2O = 2-formamido-N(1)-(5-O-phospho-beta-D-ribosyl)acetamidine + L-glutamate + ADP + phosphate + H(+). It participates in purine metabolism; IMP biosynthesis via de novo pathway; 5-amino-1-(5-phospho-D-ribosyl)imidazole from N(2)-formyl-N(1)-(5-phospho-D-ribosyl)glycinamide: step 1/2. Functionally, part of the phosphoribosylformylglycinamidine synthase complex involved in the purines biosynthetic pathway. Catalyzes the ATP-dependent conversion of formylglycinamide ribonucleotide (FGAR) and glutamine to yield formylglycinamidine ribonucleotide (FGAM) and glutamate. The FGAM synthase complex is composed of three subunits. PurQ produces an ammonia molecule by converting glutamine to glutamate. PurL transfers the ammonia molecule to FGAR to form FGAM in an ATP-dependent manner. PurS interacts with PurQ and PurL and is thought to assist in the transfer of the ammonia molecule from PurQ to PurL. The protein is Phosphoribosylformylglycinamidine synthase subunit PurL of Thermoplasma volcanium (strain ATCC 51530 / DSM 4299 / JCM 9571 / NBRC 15438 / GSS1).